Consider the following 195-residue polypeptide: SAGA-associated factor 11 homolog (195 aa).

A disordered region spans residues 1 to 22 (MSAANMPTTTGAQGSGNQVPRT). Residues 105-126 (CTCPNCDRLVAAARFAPHLEKC) form an SGF11-type zinc finger. Residues 140 to 195 (RLATKEGATSAHLHSSGNTGGTDDEDDVDWSSDKRRKKSNQNSRNNGSKKNNGKTF) are disordered. S171 bears the Phosphoserine mark. The span at 179–195 (NQNSRNNGSKKNNGKTF) shows a compositional bias: low complexity.

The protein belongs to the SGF11 family. As to quaternary structure, component of some SAGA transcription coactivator-HAT complexes, at least composed of Ada2b, not/nonstop, Pcaf/Gcn5, Sgf11 and Spt3. Within the SAGA complex, Sgf11, e(y)2, and not/nonstop form an additional subcomplex of SAGA called the DUB module (deubiquitination module). Interacts directly with not/nonstop. Interacts with the AMEX complex component xmas-2. Interacts with Cbp80; important for promoter recruitment of Sgf11 that is not associated with the DUB module.

It is found in the nucleus. The protein resides in the nucleoplasm. It localises to the cytoplasm. Component of the transcription regulatory histone acetylation (HAT) complex SAGA, a multiprotein complex that activates transcription by remodeling chromatin and mediating histone acetylation and deubiquitination. Within the SAGA complex, participates in a subcomplex that specifically deubiquitinates histone H2B. The SAGA complex is recruited to specific gene promoters by activators, where it is required for transcription. Required for nuclear receptor-mediated transactivation. Binds independently on SAGA to promoters in an RNA-dependent manner. Binds to mRNA and is essential for total mRNA export from the nucleus. Required to counteract heterochromatin silencing. Controls the development of neuronal connectivity in visual system by being required for accurate axon targeting in the optic lobe. Required for expression of ecdysone-induced genes such as br/broad. The polypeptide is SAGA-associated factor 11 homolog (Drosophila sechellia (Fruit fly)).